The primary structure comprises 138 residues: Gap junction alpha-4 protein (138 aa).

Residues 1 to 16 lie on the Cytoplasmic side of the membrane; sequence DWGFLEKLLDQVQEHS. Residues 17–39 form a helical membrane-spanning segment; sequence TVVGKIWLTVLFIFRILILGLAG. The Extracellular segment spans residues 40-74; it reads ESVWGDEQSDFECNTAQPGCTNVCYDQAFPISHIP. A helical membrane pass occupies residues 75 to 97; that stretch reads YWVLQFLFVSTPTLVYLGHVIYL. At 98 to 138 the chain is on the cytoplasmic side; the sequence is SRREERLRQKEGELRALPDKDPRVERALAGIERQMAKISVA.

Belongs to the connexin family. Alpha-type (group II) subfamily. As to quaternary structure, a connexon is composed of a hexamer of connexins.

It is found in the cell membrane. The protein localises to the cell junction. Its subcellular location is the gap junction. Its function is as follows. One gap junction consists of a cluster of closely packed pairs of transmembrane channels, the connexons, through which materials of low MW diffuse from one cell to a neighboring cell. This chain is Gap junction alpha-4 protein (GJA4), found in Sus scrofa (Pig).